Reading from the N-terminus, the 216-residue chain is Adenylate kinase (216 aa).

Residue 10–15 coordinates ATP; the sequence is GAGKGT. The NMP stretch occupies residues 30–59; the sequence is STGDIFRAHMSQGTPLGKLAKEYVDAGKYV. AMP contacts are provided by residues Thr-31, Arg-36, 57-59, 85-88, and Gln-92; these read KYV and GYPR. Residues 126 to 163 form an LID region; it reads GRRVCRSCGATYHVRFNPPREAGRCDRCGGELYQRSDD. Arg-127 is a binding site for ATP. Residues Cys-130 and Cys-133 each coordinate Zn(2+). An ATP-binding site is contributed by 136-137; that stretch reads TY. Positions 150 and 153 each coordinate Zn(2+). Positions 160 and 171 each coordinate AMP. ATP is bound at residue Gln-199.

It belongs to the adenylate kinase family. Monomer.

It localises to the cytoplasm. It catalyses the reaction AMP + ATP = 2 ADP. It functions in the pathway purine metabolism; AMP biosynthesis via salvage pathway; AMP from ADP: step 1/1. Functionally, catalyzes the reversible transfer of the terminal phosphate group between ATP and AMP. Plays an important role in cellular energy homeostasis and in adenine nucleotide metabolism. This is Adenylate kinase from Symbiobacterium thermophilum (strain DSM 24528 / JCM 14929 / IAM 14863 / T).